The sequence spans 290 residues: ATP synthase gamma chain (290 aa).

It belongs to the ATPase gamma chain family. In terms of assembly, F-type ATPases have 2 components, CF(1) - the catalytic core - and CF(0) - the membrane proton channel. CF(1) has five subunits: alpha(3), beta(3), gamma(1), delta(1), epsilon(1). CF(0) has three main subunits: a, b and c.

It localises to the cell membrane. Its function is as follows. Produces ATP from ADP in the presence of a proton gradient across the membrane. The gamma chain is believed to be important in regulating ATPase activity and the flow of protons through the CF(0) complex. This Buchnera aphidicola subsp. Acyrthosiphon pisum (strain 5A) protein is ATP synthase gamma chain.